A 157-amino-acid polypeptide reads, in one-letter code: MSGEFRYIVRVAGVDLPGDKALVYALADIKGIGVSTAQAVAKKLGLDPYRLLGTLSEEEVEKLSAALREIEKLGLPPWMLNRRKDPFLGVDRHLITSDLLITVRNDIEFMKKIKSYKGVRHMLGLKVRGQRTRTTGRTGLTVGVKRGKEKAQQQKGG.

Belongs to the universal ribosomal protein uS13 family. As to quaternary structure, part of the 30S ribosomal subunit. Forms a loose heterodimer with protein S19. Forms two bridges to the 50S subunit in the 70S ribosome.

Functionally, located at the top of the head of the 30S subunit, it contacts several helices of the 16S rRNA. In the 70S ribosome it contacts the 23S rRNA (bridge B1a) and protein L5 of the 50S subunit (bridge B1b), connecting the 2 subunits; these bridges are implicated in subunit movement. The polypeptide is Small ribosomal subunit protein uS13 (Thermofilum pendens (strain DSM 2475 / Hrk 5)).